A 335-amino-acid polypeptide reads, in one-letter code: Beta-ketoacyl-[acyl-carrier-protein] synthase III (335 aa).

Residues C119 and H261 contribute to the active site. The tract at residues 262 to 266 (QANQR) is ACP-binding. N291 is an active-site residue.

Belongs to the thiolase-like superfamily. FabH family. As to quaternary structure, homodimer.

It is found in the cytoplasm. The catalysed reaction is malonyl-[ACP] + acetyl-CoA + H(+) = 3-oxobutanoyl-[ACP] + CO2 + CoA. It functions in the pathway lipid metabolism; fatty acid biosynthesis. Functionally, catalyzes the condensation reaction of fatty acid synthesis by the addition to an acyl acceptor of two carbons from malonyl-ACP. Catalyzes the first condensation reaction which initiates fatty acid synthesis and may therefore play a role in governing the total rate of fatty acid production. Possesses both acetoacetyl-ACP synthase and acetyl transacylase activities. Its substrate specificity determines the biosynthesis of branched-chain and/or straight-chain of fatty acids. The protein is Beta-ketoacyl-[acyl-carrier-protein] synthase III of Prochlorococcus marinus (strain MIT 9515).